Here is a 246-residue protein sequence, read N- to C-terminus: 1-(5-phosphoribosyl)-5-[(5-phosphoribosylamino)methylideneamino] imidazole-4-carboxamide isomerase (246 aa).

Asp10 acts as the Proton acceptor in catalysis. Residue Asp131 is the Proton donor of the active site.

The protein belongs to the HisA/HisF family.

The protein localises to the cytoplasm. It carries out the reaction 1-(5-phospho-beta-D-ribosyl)-5-[(5-phospho-beta-D-ribosylamino)methylideneamino]imidazole-4-carboxamide = 5-[(5-phospho-1-deoxy-D-ribulos-1-ylimino)methylamino]-1-(5-phospho-beta-D-ribosyl)imidazole-4-carboxamide. It functions in the pathway amino-acid biosynthesis; L-histidine biosynthesis; L-histidine from 5-phospho-alpha-D-ribose 1-diphosphate: step 4/9. The chain is 1-(5-phosphoribosyl)-5-[(5-phosphoribosylamino)methylideneamino] imidazole-4-carboxamide isomerase from Acidiphilium cryptum (strain JF-5).